The chain runs to 373 residues: MHNQAPIQRRKSKRIYVGNVPIGDGAPIAVQSMTNTRTTDVAATVSQIKALERVGADIVRVSVPTMDAAEAFKLIKQQVNVPLVADIHFDYRIALKVAEYGVDCLRINPGNIGNEERIRTVVDCARDKNIPIRIGVNAGSLEKDLQEKYGEPTPQALLESAMRHVDHLDRLNFDQFKVSVKASDVFLAVESYRLLAKQIDQPLHLGITEAGGARSGAVKSAIGLGLLLSEGIGDTLRVSLAADPVEEIKVGFDILKSLRIRARGINFIACPTCSRQEFDVIGTVNALEQRLEDIITPMDVSIIGCVVNGPGEALVSTLGVTGGNKKSGLYEDGVRKDRLDNDDMIDQLEARIRAKASMLDEARRIDVQQLEAK.

Residues Cys270, Cys273, Cys305, and Glu312 each contribute to the [4Fe-4S] cluster site.

The protein belongs to the IspG family. [4Fe-4S] cluster serves as cofactor.

It carries out the reaction (2E)-4-hydroxy-3-methylbut-2-enyl diphosphate + oxidized [flavodoxin] + H2O + 2 H(+) = 2-C-methyl-D-erythritol 2,4-cyclic diphosphate + reduced [flavodoxin]. It functions in the pathway isoprenoid biosynthesis; isopentenyl diphosphate biosynthesis via DXP pathway; isopentenyl diphosphate from 1-deoxy-D-xylulose 5-phosphate: step 5/6. Functionally, converts 2C-methyl-D-erythritol 2,4-cyclodiphosphate (ME-2,4cPP) into 1-hydroxy-2-methyl-2-(E)-butenyl 4-diphosphate. The chain is 4-hydroxy-3-methylbut-2-en-1-yl diphosphate synthase (flavodoxin) from Klebsiella pneumoniae (strain 342).